The chain runs to 133 residues: p53 and DNA damage-regulated protein 1 (133 aa).

This sequence belongs to the prefoldin subunit beta family. As to quaternary structure, component of the PAQosome complex which is responsible for the biogenesis of several protein complexes and which consists of R2TP complex members RUVBL1, RUVBL2, RPAP3 and PIH1D1, URI complex members PFDN2, PFDN6, PDRG1, UXT and URI1 as well as ASDURF, POLR2E and DNAAF10/WDR92.

The protein resides in the cytoplasm. May play a role in chaperone-mediated protein folding. The polypeptide is p53 and DNA damage-regulated protein 1 (Pdrg1) (Mus musculus (Mouse)).